The sequence spans 60 residues: Large ribosomal subunit protein uL30 (60 aa).

The protein belongs to the universal ribosomal protein uL30 family. As to quaternary structure, part of the 50S ribosomal subunit.

The sequence is that of Large ribosomal subunit protein uL30 from Christiangramia forsetii (strain DSM 17595 / CGMCC 1.15422 / KT0803) (Gramella forsetii).